Consider the following 721-residue polypeptide: Photosystem I P700 chlorophyll a apoprotein A1 (721 aa).

A run of 8 helical transmembrane segments spans residues Val61–Ala84, Leu147–His170, Leu186–Leu210, Thr282–Tyr300, Trp337–Tyr360, Leu376–Val402, Ala424–His446, and Phe522–Leu540. Residues Cys564 and Cys573 each contribute to the [4Fe-4S] cluster site. The next 2 helical transmembrane spans lie at His580 to Trp601 and Leu655 to Phe677. A chlorophyll a'-binding site is contributed by His666. Chlorophyll a is bound by residues Met674 and Tyr682. Trp683 lines the phylloquinone pocket. A helical membrane pass occupies residues Ala715 to Tyr721.

The protein belongs to the PsaA/PsaB family. As to quaternary structure, the PsaA/B heterodimer binds the P700 chlorophyll special pair and subsequent electron acceptors. PSI consists of a core antenna complex that captures photons, and an electron transfer chain that converts photonic excitation into a charge separation. The eukaryotic PSI reaction center is composed of at least 11 subunits. P700 is a chlorophyll a/chlorophyll a' dimer, A0 is one or more chlorophyll a, A1 is one or both phylloquinones and FX is a shared 4Fe-4S iron-sulfur center. is required as a cofactor.

The protein resides in the plastid. It is found in the chloroplast thylakoid membrane. It catalyses the reaction reduced [plastocyanin] + hnu + oxidized [2Fe-2S]-[ferredoxin] = oxidized [plastocyanin] + reduced [2Fe-2S]-[ferredoxin]. Functionally, psaA and PsaB bind P700, the primary electron donor of photosystem I (PSI), as well as the electron acceptors A0, A1 and FX. PSI is a plastocyanin-ferredoxin oxidoreductase, converting photonic excitation into a charge separation, which transfers an electron from the donor P700 chlorophyll pair to the spectroscopically characterized acceptors A0, A1, FX, FA and FB in turn. Oxidized P700 is reduced on the lumenal side of the thylakoid membrane by plastocyanin. The polypeptide is Photosystem I P700 chlorophyll a apoprotein A1 (Ginkgo biloba (Ginkgo)).